Here is a 266-residue protein sequence, read N- to C-terminus: Manganese catalase (266 aa).

Glu-35 lines the Mn(2+) pocket. The Ca(2+) site is built by Asp-57 and Asp-61. Glu-66, His-69, Glu-148, and His-181 together coordinate Mn(2+). Residues Asn-218, Ser-220, and Gly-222 each contribute to the Ca(2+) site. Residues 243–266 (ENPEAMGGIPHIKPGDPRLHNHQG) form a disordered region. Positions 255–266 (KPGDPRLHNHQG) are enriched in basic and acidic residues.

The protein belongs to the manganese catalase family. Homohexamer. The cofactor is Ca(2+). Mn(2+) serves as cofactor.

The catalysed reaction is 2 H2O2 = O2 + 2 H2O. Its function is as follows. Catalyzes the decomposition of hydrogen peroxide into water and oxygen. The sequence is that of Manganese catalase from Lactiplantibacillus plantarum (Lactobacillus plantarum).